The following is a 464-amino-acid chain: L-cysteine desulfhydrase-like protein lolT2 (464 aa).

Residue Lys-227 is modified to N6-(pyridoxal phosphate)lysine.

It belongs to the class-V pyridoxal-phosphate-dependent aminotransferase family. Pyridoxal 5'-phosphate is required as a cofactor.

It functions in the pathway alkaloid biosynthesis. Its function is as follows. L-cysteine desulfhydrase-like protein; part of the gene cluster that mediates the biosynthesis of loline alkaloids, potent insecticidal agents composed of a pyrrolizidine ring system and an uncommon ether bridge linking carbons 2 and 7. Lolines are structurally differentiated by the various modifications of the L-amino group and include norloline, loline, N-methylloline, N-acetylloline, N-acetylnorloline, and N-formylloline. The first committed step is the condensation of O-acetyl-L-homoserine (derived from L-aspartic acid) and L-proline, probably catalyzed by the gamma-type pyridoxal 5'-phosphate(PLP)-dependent enzyme lolC, to give the diamino diacid, NACPP. Ensuing cyclization, decarboxylation, and acetylation steps yield 1-exo-acetamidopyrrolizidine (AcAP). LolO is required for installation of the ether bridge upon the pathway intermediate, 1-exo-acetamidopyrrolizidine (AcAP). In sequential 2-oxoglutarate- and O(2)-consuming steps, lolO removes hydrogens from C2 and C7 of AcAP to form both carbon-oxygen bonds in N-acetylnorloline (NANL), the precursor to all other lolines. The enzymes lolD, lolE, lolF and lolT have also been proposed to be involved in the ether-bridge installation. Further processing of the exocyclic moiety of NANL by fungal N-acetamidase (LolN), methyltransferase (LolM), and cytochrome P450 (LolP) enzymes, with occasional involvement of a plant acetyltransferase, generates the other known lolines. LolN transforms NANL to norlonine which is monomethylated and dimethylated to respectively lonine and N-methyllonine (NML) by lolM. LolP catalyzes hydroxylation of the methyl group in N-methylloline (NML) and further oxygenation to N-formylloline (NFL). A plant acetyltransferase is responsible for the acetylation of loline to form N-acetylloline (NAL). LolA might interact with aspartate kinase to prevent feedback inhibition of its activity by these end products and thereby promote production of L-homoserine from L-aspartate. This chain is L-cysteine desulfhydrase-like protein lolT2, found in Epichloe uncinata (Endophyte fungus).